A 149-amino-acid polypeptide reads, in one-letter code: 18 kDa antigen 1 (149 aa).

The 111-residue stretch at 21 to 131 folds into the sHSP domain; it reads TAARPAVMPM…KPRKIAVGRG (111 aa).

It belongs to the small heat shock protein (HSP20) family.

Functionally, not known. This protein is one of the major immune reactive proteins in mycobacteria. The chain is 18 kDa antigen 1 from Mycobacterium intracellulare.